The primary structure comprises 693 residues: Phenoloxidase subunit 2 (693 aa).

Positions 1–51 (MADVFESLELLFDRPNEPLITPKGENNSVFQLTEQFLTEDYANNGIELNNR) are excised as a propeptide. 2 N-linked (GlcNAc...) asparagine glycosylation sites follow: asparagine 26 and asparagine 64. Positions 213, 217, and 243 each coordinate Cu cation. The Proton acceptor role is filled by glutamate 351. Residues histidine 366, histidine 370, and histidine 406 each coordinate Cu cation. Residues asparagine 462 and asparagine 494 are each glycosylated (N-linked (GlcNAc...) asparagine). 2 disulfides stabilise this stretch: cysteine 583-cysteine 627 and cysteine 585-cysteine 634. Asparagine 680 carries an N-linked (GlcNAc...) asparagine glycan.

Heterodimer. The cofactor is Cu(2+). Post-translationally, the N-terminus is blocked. Synthesized by hemocytes and released into the hemolymph plasma.

It is found in the secreted. It catalyses the reaction 2 L-dopa + O2 = 2 L-dopaquinone + 2 H2O. The catalysed reaction is L-tyrosine + O2 = L-dopaquinone + H2O. Functionally, this is a copper-containing oxidase that functions in the formation of pigments such as melanins and other polyphenolic compounds. Catalyzes the rate-limiting conversions of tyrosine to DOPA, DOPA to DOPA-quinone and possibly 5,6 dihydroxyindole to indole-5'6 quinone. In Bombyx mori (Silk moth), this protein is Phenoloxidase subunit 2.